The primary structure comprises 21 residues: Conchiolin protein p20 (21 aa).

Over residues 1 to 14 the composition is skewed to low complexity; sequence YQRXSRYYYYXGPP. Residues 1–21 are disordered; the sequence is YQRXSRYYYYXGPPDDIDDRY.

This sequence belongs to the N16 matrix protein family. Homooligomer; disulfide-linked. May also be disulfide-linked to insoluble organic matrix. Post-translationally, according to PubMed:11250534, amino acids 4 and 11 may be sulfated or phosphorylated. By similarity with the N14 matrix protein, amino-acid 4 may be a cysteine involved in a disulfide bond. In terms of tissue distribution, component of conchiolin, the organic matrix of nacre. Is dispersed in calcium carbonate and also linked by disulfide bonds to the organic core of nacre.

The protein resides in the secreted. The protein localises to the extracellular space. It localises to the extracellular matrix. Functionally, may be specifically involved in the formation of the nacreous layer. This Pinctada maxima (Silver-lipped pearl oyster) protein is Conchiolin protein p20.